A 211-amino-acid polypeptide reads, in one-letter code: tRNA (guanine-N(7)-)-methyltransferase (211 aa).

Residues glutamate 44, aspartate 69, aspartate 96, and aspartate 118 each coordinate S-adenosyl-L-methionine. Residue aspartate 118 is part of the active site. Lysine 122 is a substrate binding site. Residues 124–129 (KHEKRR) are interaction with RNA. Substrate contacts are provided by residues aspartate 154 and 191–194 (TEYE).

Belongs to the class I-like SAM-binding methyltransferase superfamily. TrmB family.

The enzyme catalyses guanosine(46) in tRNA + S-adenosyl-L-methionine = N(7)-methylguanosine(46) in tRNA + S-adenosyl-L-homocysteine. The protein operates within tRNA modification; N(7)-methylguanine-tRNA biosynthesis. Catalyzes the formation of N(7)-methylguanine at position 46 (m7G46) in tRNA. The protein is tRNA (guanine-N(7)-)-methyltransferase of Streptococcus uberis (strain ATCC BAA-854 / 0140J).